The primary structure comprises 514 residues: Putative binding protein HI_0213 (514 aa).

Residues methionine 1–alanine 23 form the signal peptide. Cysteine 24 is lipidated: N-palmitoyl cysteine. Cysteine 24 carries S-diacylglycerol cysteine lipidation.

It belongs to the bacterial solute-binding protein 5 family.

The protein resides in the cell membrane. Part of a binding-protein-dependent transport system. The polypeptide is Putative binding protein HI_0213 (Haemophilus influenzae (strain ATCC 51907 / DSM 11121 / KW20 / Rd)).